We begin with the raw amino-acid sequence, 827 residues long: Translation initiation factor IF-2 (827 aa).

The tract at residues 49–205 (ALNREKEEKE…GAPDKKREWE (157 aa)) is disordered. Basic and acidic residues-rich tracts occupy residues 50 to 73 (LNREKEEKEKKEQEKKQVEQKAEA), 96 to 106 (RPREQRSDRPQ), 116 to 129 (PEPRDKDKGRRPGE), 137 to 150 (RPRDDRRRFDKERG), 157 to 168 (FGEKKERPPFPR), and 182 to 205 (EAPKGENKEPERRKGAPDKKREWE). Residues 326 to 495 (PRPPIVTVMG…LLVADLKELK (170 aa)) form the tr-type G domain. The interval 335–342 (GHVDHGKT) is G1. A GTP-binding site is contributed by 335 to 342 (GHVDHGKT). The segment at 360 to 364 (GITQH) is G2. The tract at residues 381 to 384 (DTPG) is G3. GTP is bound by residues 381 to 385 (DTPGH) and 435 to 438 (NKID). The G4 stretch occupies residues 435–438 (NKID). The segment at 471-473 (SAL) is G5.

It belongs to the TRAFAC class translation factor GTPase superfamily. Classic translation factor GTPase family. IF-2 subfamily.

It is found in the cytoplasm. One of the essential components for the initiation of protein synthesis. Protects formylmethionyl-tRNA from spontaneous hydrolysis and promotes its binding to the 30S ribosomal subunits. Also involved in the hydrolysis of GTP during the formation of the 70S ribosomal complex. This Carboxydothermus hydrogenoformans (strain ATCC BAA-161 / DSM 6008 / Z-2901) protein is Translation initiation factor IF-2.